The chain runs to 1937 residues: Myosin-2 (1937 aa).

Residues 33–82 form the Myosin N-terminal SH3-like domain; that stretch reads DAKTSVFVAEPKESFVKGTIQSREGGKVTVKTDAGATLTVKEDQVFPMNP. 2 positions are modified to phosphothreonine: T64 and T69. Residues 86–780 form the Myosin motor domain; sequence DKIEDMAMMT…LLGLLEEMRD (695 aa). At K130 the chain carries N6,N6,N6-trimethyllysine. Residue 179–186 coordinates ATP; sequence GESGAGKT. At Y387 the chain carries Phosphotyrosine. T417 carries the post-translational modification Phosphothreonine. Residue S623 is modified to Phosphoserine. The segment at 657–679 is actin-binding; that stretch reads LNKLMTNLRSTHPHFVRCIIPNE. Position 755 is a pros-methylhistidine (H755). Positions 759 to 773 are actin-binding; the sequence is KFGHTKVFFKAGLLG. The 30-residue stretch at 783–812 folds into the IQ domain; that stretch reads LAQIITRTQARCRGFLARVEYQKMVERRES. A coiled-coil region spans residues 841–1937; that stretch reads LLKSAETEKE…EVHTKIISEE (1097 aa). S1094 is modified (phosphoserine). Disordered stretches follow at residues 1124-1145 and 1151-1170; these read IEAE…SREL and RLEE…KKRE. The span at 1126 to 1145 shows a compositional bias: basic and acidic residues; sequence AERASRAKAEKQRSDLSREL. A phosphoserine mark is found at S1160 and S1235. Phosphothreonine is present on T1239. Position 1241 is a phosphoserine (S1241). Phosphothreonine is present on T1253. S1259 is modified (phosphoserine). T1284 is modified (phosphothreonine). Phosphoserine is present on residues S1290, S1301, and S1304. A Phosphotyrosine modification is found at Y1462. T1465 carries the post-translational modification Phosphothreonine. Position 1472 is a phosphoserine (S1472). Y1490 is modified (phosphotyrosine). A Phosphoserine modification is found at S1493. T1499 bears the Phosphothreonine mark. Phosphoserine is present on S1512. T1515 is subject to Phosphothreonine. Phosphoserine is present on residues S1540, S1552, S1572, S1712, and S1724. 2 positions are modified to phosphothreonine: T1728 and T1734. Residue S1737 is modified to Phosphoserine. A disordered region spans residues 1883–1913; sequence QAEEAEEQSNTNLSKFRKLQHELEEAEERAD.

The protein belongs to the TRAFAC class myosin-kinesin ATPase superfamily. Myosin family. As to quaternary structure, muscle myosin is a hexameric protein that consists of 2 heavy chain subunits (MHC), 2 alkali light chain subunits (MLC) and 2 regulatory light chain subunits (MLC-2). Interacts with GCSAM.

The protein localises to the cytoplasm. Its subcellular location is the myofibril. Its function is as follows. Myosins are actin-based motor molecules with ATPase activity essential for muscle contraction. In Equus caballus (Horse), this protein is Myosin-2 (MYH2).